The chain runs to 76 residues: Translational regulator CsrA (76 aa).

Belongs to the CsrA/RsmA family. Homodimer; the beta-strands of each monomer intercalate to form a hydrophobic core, while the alpha-helices form wings that extend away from the core.

It localises to the cytoplasm. Its function is as follows. A translational regulator that binds mRNA to regulate translation initiation and/or mRNA stability. Usually binds in the 5'-UTR at or near the Shine-Dalgarno sequence preventing ribosome-binding, thus repressing translation. Its main target seems to be the major flagellin gene, while its function is anatagonized by FliW. The sequence is that of Translational regulator CsrA from Pseudothermotoga lettingae (strain ATCC BAA-301 / DSM 14385 / NBRC 107922 / TMO) (Thermotoga lettingae).